The primary structure comprises 201 residues: MVFIADYGAGNLRSVHKAFDYLGIEAVVSDKASEMSRYDKVLIPGVGAFGPAMEALNRQGFDEAIREHIDKGRSVLGICLGMQLFLSESEEMGAYKGLDIVPGKVLRFTSSTDKIPQIGWNSVDYCKDSVLFRNVPDQSYFYFVHSYYCAPDEPESVAATTFFAGKKFCSAIEKNGIFAVQFHPEKSSEAGLQVLKNFAEF.

The region spanning 1 to 201 (MVFIADYGAG…LQVLKNFAEF (201 aa)) is the Glutamine amidotransferase type-1 domain. Catalysis depends on Cys79, which acts as the Nucleophile. Active-site residues include His183 and Glu185.

In terms of assembly, heterodimer of HisH and HisF.

It localises to the cytoplasm. It carries out the reaction 5-[(5-phospho-1-deoxy-D-ribulos-1-ylimino)methylamino]-1-(5-phospho-beta-D-ribosyl)imidazole-4-carboxamide + L-glutamine = D-erythro-1-(imidazol-4-yl)glycerol 3-phosphate + 5-amino-1-(5-phospho-beta-D-ribosyl)imidazole-4-carboxamide + L-glutamate + H(+). The enzyme catalyses L-glutamine + H2O = L-glutamate + NH4(+). The protein operates within amino-acid biosynthesis; L-histidine biosynthesis; L-histidine from 5-phospho-alpha-D-ribose 1-diphosphate: step 5/9. In terms of biological role, IGPS catalyzes the conversion of PRFAR and glutamine to IGP, AICAR and glutamate. The HisH subunit catalyzes the hydrolysis of glutamine to glutamate and ammonia as part of the synthesis of IGP and AICAR. The resulting ammonia molecule is channeled to the active site of HisF. This chain is Imidazole glycerol phosphate synthase subunit HisH, found in Chlorobaculum tepidum (strain ATCC 49652 / DSM 12025 / NBRC 103806 / TLS) (Chlorobium tepidum).